The sequence spans 155 residues: Phospholipase A2 A2-actitoxin-Ucs2a (155 aa).

The N-terminal stretch at 1-19 (MKNNIILVILLGISVFVDC) is a signal peptide. The propeptide occupies 20–42 (LPLNDQEEDKSLNAQESEVSAVQ). Intrachain disulfides connect Cys-55–Cys-118, Cys-71–Cys-87, Cys-86–Cys-143, Cys-93–Cys-136, Cys-100–Cys-129, and Cys-122–Cys-134. Residues Gly-72 and Gly-74 each coordinate Ca(2+). His-90 is a catalytic residue. Asp-91 contacts Ca(2+). Asp-137 is a catalytic residue.

Belongs to the phospholipase A2 family. The cofactor is Ca(2+).

Its subcellular location is the secreted. The protein resides in the nematocyst. The catalysed reaction is a 1,2-diacyl-sn-glycero-3-phosphocholine + H2O = a 1-acyl-sn-glycero-3-phosphocholine + a fatty acid + H(+). Its function is as follows. PLA2 catalyzes the calcium-dependent hydrolysis of the 2-acyl groups in 3-sn-phosphoglycerides. This Urticina crassicornis (Mottled anemone) protein is Phospholipase A2 A2-actitoxin-Ucs2a.